The primary structure comprises 277 residues: Shikimate dehydrogenase (NADP(+)) (277 aa).

Shikimate-binding positions include 15-17 and T62; that span reads SLS. K66 serves as the catalytic Proton acceptor. The shikimate site is built by N87 and D102. Residues 127–131, 151–156, and I219 contribute to the NADP(+) site; these read GAGGA and NRTRDK. Position 221 (Y221) interacts with shikimate. G242 is a binding site for NADP(+).

It belongs to the shikimate dehydrogenase family. Homodimer.

It carries out the reaction shikimate + NADP(+) = 3-dehydroshikimate + NADPH + H(+). The protein operates within metabolic intermediate biosynthesis; chorismate biosynthesis; chorismate from D-erythrose 4-phosphate and phosphoenolpyruvate: step 4/7. Functionally, involved in the biosynthesis of the chorismate, which leads to the biosynthesis of aromatic amino acids. Catalyzes the reversible NADPH linked reduction of 3-dehydroshikimate (DHSA) to yield shikimate (SA). This Bacillus mycoides (strain KBAB4) (Bacillus weihenstephanensis) protein is Shikimate dehydrogenase (NADP(+)).